The primary structure comprises 119 residues: MARFVVVALLVLLSLSGLEAIQRAPKIQVYSRHPAENGKPNFLNCYVSGFHPSDIEVDLLKNGKKIEKVEHSDLSFSKDWSFYLLYYTEFTPNEKDEYACRVSHVTLSTPKTVKWDRNM.

The signal sequence occupies residues Met1–Ala20. In terms of domain architecture, Ig-like C1-type spans Pro25–Lys114. Cys45 and Cys100 are joined by a disulfide.

This sequence belongs to the beta-2-microglobulin family. As to quaternary structure, heterodimer of an alpha chain and a beta chain. Beta-2-microglobulin is the beta-chain of major histocompatibility complex class I molecules.

The protein resides in the secreted. Functionally, component of the class I major histocompatibility complex (MHC). Involved in the presentation of peptide antigens to the immune system. The sequence is that of Beta-2-microglobulin (B2M) from Aotus azarae (Azara's night monkey).